A 192-amino-acid chain; its full sequence is Glycerol-3-phosphate acyltransferase (192 aa).

Helical transmembrane passes span 4 to 24 (MFWLLATFAYLLGSLSFAILL), 54 to 74 (LAILTLLGDLCKGLLPILIAS), 80 to 100 (IAQQGWIGVCAVLGHLFPVYF), 112 to 132 (AGVLLGLYPPAAALAIAAWLL), and 154 to 174 (LLAWQEPHALLPMSVLTLLIV).

This sequence belongs to the PlsY family. In terms of assembly, probably interacts with PlsX.

The protein localises to the cell inner membrane. It carries out the reaction an acyl phosphate + sn-glycerol 3-phosphate = a 1-acyl-sn-glycero-3-phosphate + phosphate. Its pathway is lipid metabolism; phospholipid metabolism. Functionally, catalyzes the transfer of an acyl group from acyl-phosphate (acyl-PO(4)) to glycerol-3-phosphate (G3P) to form lysophosphatidic acid (LPA). This enzyme utilizes acyl-phosphate as fatty acyl donor, but not acyl-CoA or acyl-ACP. This Pseudomonas savastanoi pv. phaseolicola (strain 1448A / Race 6) (Pseudomonas syringae pv. phaseolicola (strain 1448A / Race 6)) protein is Glycerol-3-phosphate acyltransferase.